A 223-amino-acid polypeptide reads, in one-letter code: Uracil-DNA glycosylase (223 aa).

The active-site Proton acceptor is the aspartate 66.

The protein belongs to the uracil-DNA glycosylase (UDG) superfamily. UNG family.

The protein localises to the cytoplasm. The catalysed reaction is Hydrolyzes single-stranded DNA or mismatched double-stranded DNA and polynucleotides, releasing free uracil.. Its function is as follows. Excises uracil residues from the DNA which can arise as a result of misincorporation of dUMP residues by DNA polymerase or due to deamination of cytosine. This Sulfurimonas denitrificans (strain ATCC 33889 / DSM 1251) (Thiomicrospira denitrificans (strain ATCC 33889 / DSM 1251)) protein is Uracil-DNA glycosylase.